Consider the following 195-residue polypeptide: Protein GrpE (195 aa).

It belongs to the GrpE family. As to quaternary structure, homodimer.

Its subcellular location is the cytoplasm. Functionally, participates actively in the response to hyperosmotic and heat shock by preventing the aggregation of stress-denatured proteins, in association with DnaK and GrpE. It is the nucleotide exchange factor for DnaK and may function as a thermosensor. Unfolded proteins bind initially to DnaJ; upon interaction with the DnaJ-bound protein, DnaK hydrolyzes its bound ATP, resulting in the formation of a stable complex. GrpE releases ADP from DnaK; ATP binding to DnaK triggers the release of the substrate protein, thus completing the reaction cycle. Several rounds of ATP-dependent interactions between DnaJ, DnaK and GrpE are required for fully efficient folding. In Francisella tularensis subsp. tularensis (strain FSC 198), this protein is Protein GrpE.